Here is a 255-residue protein sequence, read N- to C-terminus: tRNA (guanine-N(7)-)-methyltransferase (255 aa).

Residues E64, E89, D116, and D138 each contribute to the S-adenosyl-L-methionine site. Residue D138 is part of the active site. Substrate is bound by residues K142, D174, and 212–215 (TRYE).

It belongs to the class I-like SAM-binding methyltransferase superfamily. TrmB family.

It carries out the reaction guanosine(46) in tRNA + S-adenosyl-L-methionine = N(7)-methylguanosine(46) in tRNA + S-adenosyl-L-homocysteine. It functions in the pathway tRNA modification; N(7)-methylguanine-tRNA biosynthesis. Functionally, catalyzes the formation of N(7)-methylguanine at position 46 (m7G46) in tRNA. In Rhodospirillum rubrum (strain ATCC 11170 / ATH 1.1.1 / DSM 467 / LMG 4362 / NCIMB 8255 / S1), this protein is tRNA (guanine-N(7)-)-methyltransferase.